The following is a 954-amino-acid chain: Patched domain-containing protein 3 (954 aa).

Residues 1–20 (MPWVEPKPRPGPEQKPKLTK) show a composition bias toward basic and acidic residues. The interval 1-103 (MPWVEPKPRP…APLPEEETPE (103 aa)) is disordered. The span at 42-57 (QPPPGPLAPPKSPEPS) shows a compositional bias: pro residues. Residues 90 to 102 (ELDDAPLPEEETP) show a composition bias toward acidic residues. A helical membrane pass occupies residues 139-159 (WIFLLAPLMLTAALGTGFLYL). Asparagine 192, asparagine 275, and asparagine 279 each carry an N-linked (GlcNAc...) asparagine glycan. 7 helical membrane passes run 297–317 (LTGFFGGYILGGSLGMGQLLL), 383–403 (VIPVFHLAYILIILFAVTSCF), 423–443 (FLAVVSGFGLLLHIGVPFVII), 447–467 (SPFLILGVGVDDMFIMISAWH), 486–506 (AAVSITITTITNILALYTGIM), 520–540 (GMTLLFCYFYNITCFGAFMAL), and 603–623 (YFVVFIYVLYIISSIYGCFHV). In terms of domain architecture, SSD spans 383-540 (VIPVFHLAYI…ITCFGAFMAL (158 aa)). 3 N-linked (GlcNAc...) asparagine glycosylation sites follow: asparagine 678, asparagine 692, and asparagine 737. The next 5 helical transmembrane spans lie at 804 to 824 (VLVASAAMFIVSLLLIPYPLC), 826 to 846 (LWVTFAIGSVIVGVTGFMAFW), 858 to 878 (LVICIGFSFDFSVHISYAFVS), 894 to 914 (LLGYPVLQSAISTIIGVCVLA), and 927 to 947 (IMFLVMIFGAAHGLIFIPVFL).

Belongs to the patched family. Expressed in germ cells of the testis (at protein level). Detected in blood lymph, colon, small intestine, ovary, testis, prostate, thymus and spleen with highest levels in testis.

The protein localises to the cell projection. Its subcellular location is the cilium. It is found in the flagellum membrane. It localises to the endoplasmic reticulum membrane. Its function is as follows. May play a role in sperm development or sperm function. However, does not appear to have an essential role in spermatogenesis or male fertility. The polypeptide is Patched domain-containing protein 3 (PTCHD3) (Homo sapiens (Human)).